Reading from the N-terminus, the 282-residue chain is Undecaprenyl-diphosphatase (282 aa).

Transmembrane regions (helical) follow at residues 40–60, 85–105, 117–137, 158–178, 193–213, 231–251, and 258–278; these read GAAFTAIVQIGTLIAVLIYFF, AKMGWMIAAGTIPIVVFGLLF, YWISAALITLAIILSLAEWLI, ALIIGLVQSIALIPGSSRSGV, AARFSFLLSLPAVFAAGIYQL, IVATLVAGIVGYASIAFLITF, and AVFIIYRIALGLTILALIATG.

Belongs to the UppP family.

The protein resides in the cell inner membrane. It catalyses the reaction di-trans,octa-cis-undecaprenyl diphosphate + H2O = di-trans,octa-cis-undecaprenyl phosphate + phosphate + H(+). Functionally, catalyzes the dephosphorylation of undecaprenyl diphosphate (UPP). Confers resistance to bacitracin. This chain is Undecaprenyl-diphosphatase, found in Prosthecochloris aestuarii (strain DSM 271 / SK 413).